The chain runs to 495 residues: Syntaphilin (495 aa).

Residues 1 to 74 (MAMSLQGSRR…HGIKPPTPEQ (74 aa)) are disordered. Positions 7–49 (GSRRASAGSRRRTSPPVSVRDAYGTSSLSSSSNSGSCKGSDSS) are enriched in low complexity. A coiled-coil region spans residues 79–161 (LQQKEVCIRH…VKNNLIDKDK (83 aa)). The tract at residues 191-244 (VAKEEGTGESAGGSPARSLTRSSTYTKLSDPAVCGDRQPGDPSNTSAEDGADSG) is disordered. 2 positions are modified to phosphoserine: S200 and S204. A compositionally biased stretch (polar residues) spans 207–217 (RSLTRSSTYTK). T214 carries the post-translational modification Phosphothreonine. A Phosphoserine modification is found at S219. Position 235 is a phosphothreonine (T235). Residues 427 to 446 (YIVDLLAVVVPAVPTVAWLC) form a helical membrane-spanning segment.

As to quaternary structure, binds to STX1A. Interacts with DNM1; this interaction inhibits the binding of DNM1 to AMPH and DNM1-receptor-mediated endocytosis.

The protein localises to the membrane. It localises to the synapse. The protein resides in the synaptosome. In terms of biological role, inhibits SNARE complex formation by absorbing free STX1A. This chain is Syntaphilin, found in Mus musculus (Mouse).